Consider the following 342-residue polypeptide: Dihydroorotate dehydrogenase (quinone) (342 aa).

FMN contacts are provided by residues 65–69 and T89; that span reads AGLDK. Residue K69 participates in substrate binding. 114–118 is a substrate binding site; the sequence is NRMGF. FMN is bound by residues N142 and N175. A substrate-binding site is contributed by N175. Residue S178 is the Nucleophile of the active site. Residue N180 participates in substrate binding. Positions 220 and 248 each coordinate FMN. 249-250 is a substrate binding site; it reads NT. Residues G271, G300, and 321–322 contribute to the FMN site; that span reads YT.

It belongs to the dihydroorotate dehydrogenase family. Type 2 subfamily. Monomer. It depends on FMN as a cofactor.

The protein resides in the cell membrane. It carries out the reaction (S)-dihydroorotate + a quinone = orotate + a quinol. Its pathway is pyrimidine metabolism; UMP biosynthesis via de novo pathway; orotate from (S)-dihydroorotate (quinone route): step 1/1. Its function is as follows. Catalyzes the conversion of dihydroorotate to orotate with quinone as electron acceptor. This is Dihydroorotate dehydrogenase (quinone) from Burkholderia pseudomallei (strain K96243).